We begin with the raw amino-acid sequence, 316 residues long: Thymidylate synthase (316 aa).

DUMP-binding positions include Arg-23 and 178 to 179; that span reads RR. Residue Cys-198 is the Nucleophile of the active site. Residues 218-221, Asn-229, and 259-261 contribute to the dUMP site; these read RSGD and HIY. Residue Asp-221 participates in (6R)-5,10-methylene-5,6,7,8-tetrahydrofolate binding. Ala-315 is a (6R)-5,10-methylene-5,6,7,8-tetrahydrofolate binding site.

Belongs to the thymidylate synthase family. Bacterial-type ThyA subfamily. Homodimer.

It localises to the cytoplasm. It carries out the reaction dUMP + (6R)-5,10-methylene-5,6,7,8-tetrahydrofolate = 7,8-dihydrofolate + dTMP. It participates in pyrimidine metabolism; dTTP biosynthesis. In terms of biological role, catalyzes the reductive methylation of 2'-deoxyuridine-5'-monophosphate (dUMP) to 2'-deoxythymidine-5'-monophosphate (dTMP) while utilizing 5,10-methylenetetrahydrofolate (mTHF) as the methyl donor and reductant in the reaction, yielding dihydrofolate (DHF) as a by-product. This enzymatic reaction provides an intracellular de novo source of dTMP, an essential precursor for DNA biosynthesis. The polypeptide is Thymidylate synthase (Latilactobacillus sakei subsp. sakei (strain 23K) (Lactobacillus sakei subsp. sakei)).